The primary structure comprises 527 residues: Zinc finger C2HC domain-containing protein 1C (527 aa).

Disordered stretches follow at residues 18 to 105 (HNKT…GQGK) and 145 to 170 (VHRK…LPDS). A compositionally biased stretch (polar residues) spans 50–61 (NSFQSKLWSNTE). Residues 71–85 (RPKRNVCTKARRHSC) are compositionally biased toward basic residues. Low complexity predominate over residues 93-102 (QQGSGNNAQG). A coiled-coil region spans residues 207–254 (TQIQRLEAAGESLQKEIRRKEILLQEKLKKTEEGLRRMQKEKKQAIFQ). Disordered stretches follow at residues 264 to 316 (LPRR…LSDY) and 352 to 379 (LGST…EPEL). Positions 286–298 (FRSEVFSRNRGED) are enriched in basic and acidic residues. The segment covering 301–312 (CDQAQENPSPRQ) has biased composition (polar residues). Residues 358 to 374 (ESSRSGTPGSSGSSSST) are compositionally biased toward low complexity. 2 consecutive C2HC/C3H-type zinc fingers follow at residues 378 to 407 (ELAK…MQGS) and 489 to 518 (DYVQ…IKNR). The Zn(2+) site is built by Cys382, Cys385, His397, Cys401, Cys493, Cys496, His508, and Cys512. The interval 507–527 (RHIPKCKTIKNRPPPPRRHDS) is disordered.

Belongs to the ZC2HC1 family. The cofactor is Zn(2+).

The chain is Zinc finger C2HC domain-containing protein 1C (Zc2hc1c) from Mus musculus (Mouse).